The chain runs to 205 residues: Dephospho-CoA kinase (205 aa).

Residues 6-205 (RIGLTGGIAA…EIYAGWCAGR (200 aa)) enclose the DPCK domain. 14–19 (AAGKST) is an ATP binding site.

This sequence belongs to the CoaE family.

It is found in the cytoplasm. It catalyses the reaction 3'-dephospho-CoA + ATP = ADP + CoA + H(+). Its pathway is cofactor biosynthesis; coenzyme A biosynthesis; CoA from (R)-pantothenate: step 5/5. Its function is as follows. Catalyzes the phosphorylation of the 3'-hydroxyl group of dephosphocoenzyme A to form coenzyme A. The sequence is that of Dephospho-CoA kinase from Bifidobacterium longum (strain NCC 2705).